Here is a 487-residue protein sequence, read N- to C-terminus: uncharacterized protein (487 aa).

The next 3 helical transmembrane spans lie at 10-30, 45-65, and 439-459; these read AALM…AADA, VISP…AVAA, and APVV…DFTL.

It localises to the cell membrane. This is an uncharacterized protein from Mycobacterium tuberculosis (strain CDC 1551 / Oshkosh).